The primary structure comprises 311 residues: Methionyl-tRNA formyltransferase (311 aa).

110-113 contributes to the (6S)-5,6,7,8-tetrahydrofolate binding site; the sequence is SLLP.

Belongs to the Fmt family.

The catalysed reaction is L-methionyl-tRNA(fMet) + (6R)-10-formyltetrahydrofolate = N-formyl-L-methionyl-tRNA(fMet) + (6S)-5,6,7,8-tetrahydrofolate + H(+). Functionally, attaches a formyl group to the free amino group of methionyl-tRNA(fMet). The formyl group appears to play a dual role in the initiator identity of N-formylmethionyl-tRNA by promoting its recognition by IF2 and preventing the misappropriation of this tRNA by the elongation apparatus. This chain is Methionyl-tRNA formyltransferase, found in Streptococcus sanguinis (strain SK36).